We begin with the raw amino-acid sequence, 239 residues long: Proteasome subunit beta type-6 (239 aa).

Alanine 2 is modified (N-acetylalanine). Residues 2–34 constitute a propeptide, removed in mature form; the sequence is AATLLAARGAGPAPAWGPEAFTPDWESREVSTG. The active-site Nucleophile is threonine 35. The residue at position 69 (threonine 69) is a Phosphothreonine.

The protein belongs to the peptidase T1B family. As to quaternary structure, the 26S proteasome consists of a 20S proteasome core and two 19S regulatory subunits. The 20S proteasome core is a barrel-shaped complex made of 28 subunits that are arranged in four stacked rings. The two outer rings are each formed by seven alpha subunits, and the two inner rings are formed by seven beta subunits. The proteolytic activity is exerted by three beta-subunits PSMB5, PSMB6 and PSMB7. In terms of assembly, (Microbial infection) Interacts with HIV-1 protein Tat.

The protein resides in the cytoplasm. It localises to the nucleus. It carries out the reaction Cleavage of peptide bonds with very broad specificity.. Its function is as follows. Component of the 20S core proteasome complex involved in the proteolytic degradation of most intracellular proteins. This complex plays numerous essential roles within the cell by associating with different regulatory particles. Associated with two 19S regulatory particles, forms the 26S proteasome and thus participates in the ATP-dependent degradation of ubiquitinated proteins. The 26S proteasome plays a key role in the maintenance of protein homeostasis by removing misfolded or damaged proteins that could impair cellular functions, and by removing proteins whose functions are no longer required. Associated with the PA200 or PA28, the 20S proteasome mediates ubiquitin-independent protein degradation. This type of proteolysis is required in several pathways including spermatogenesis (20S-PA200 complex) or generation of a subset of MHC class I-presented antigenic peptides (20S-PA28 complex). Within the 20S core complex, PSMB6 displays a peptidylglutamyl-hydrolizing activity also termed postacidic or caspase-like activity, meaning that the peptides bond hydrolysis occurs directly after acidic residues. This is Proteasome subunit beta type-6 from Homo sapiens (Human).